Here is a 29-residue protein sequence, read N- to C-terminus: Ranatuerin-2SEa (29 aa).

Residues Cys23 and Cys29 are joined by a disulfide bond.

In terms of tissue distribution, expressed by the skin glands.

The protein localises to the secreted. In terms of biological role, mast cell degranulating peptide. Causes histamine release from rat peritoneal mast cells in vitro. Has antibacterial activity against the Gram-negative bacterium E.coli K12 and Gram-positive bacterium M.luteus NCT C2665. The sequence is that of Ranatuerin-2SEa from Lithobates sevosus (Dusky gopher frog).